The primary structure comprises 331 residues: D-aspartate oxidase 2 (331 aa).

FAD-binding residues include aspartate 35, lysine 36, serine 43, and glycine 307.

It belongs to the DAMOX/DASOX family. FAD is required as a cofactor.

It localises to the cytoplasm. It carries out the reaction D-aspartate + O2 + H2O = oxaloacetate + H2O2 + NH4(+). It catalyses the reaction D-glutamate + O2 + H2O = H2O2 + 2-oxoglutarate + NH4(+). Its function is as follows. Selectively catalyzes the oxidative deamination of acidic amino acids. May play a role in the egg-laying events and early development of the worm, in addition to quality control of the germ cells. In Caenorhabditis briggsae, this protein is D-aspartate oxidase 2.